We begin with the raw amino-acid sequence, 239 residues long: Transcriptional regulatory protein BtsR (239 aa).

The 114-residue stretch at 3–116 (KVLIVDDEPL…RLEKTLARLR (114 aa)) folds into the Response regulatory domain. At D54 the chain carries 4-aspartylphosphate. The region spanning 137 to 239 (IPCTGHSRIY…LKSLKEAIGL (103 aa)) is the HTH LytTR-type domain.

Post-translationally, phosphorylated by BtsS.

Functionally, member of the two-component regulatory system BtsS/BtsR. BtsR regulates expression of btsT by binding to its promoter region. This Escherichia coli O6:H1 (strain CFT073 / ATCC 700928 / UPEC) protein is Transcriptional regulatory protein BtsR.